We begin with the raw amino-acid sequence, 786 residues long: Endonuclease MutS2 (786 aa).

335 to 342 provides a ligand contact to ATP; it reads GPNTGGKT. The tract at residues 529 to 549 is disordered; the sequence is SQKNAERERKEAEEHRKQSEK. Positions 711–786 constitute a Smr domain; that stretch reads LDLRGERYED…GLGVTVVELK (76 aa).

It belongs to the DNA mismatch repair MutS family. MutS2 subfamily. Homodimer. Binds to stalled ribosomes, contacting rRNA.

In terms of biological role, endonuclease that is involved in the suppression of homologous recombination and thus may have a key role in the control of bacterial genetic diversity. Functionally, acts as a ribosome collision sensor, splitting the ribosome into its 2 subunits. Detects stalled/collided 70S ribosomes which it binds and splits by an ATP-hydrolysis driven conformational change. Acts upstream of the ribosome quality control system (RQC), a ribosome-associated complex that mediates the extraction of incompletely synthesized nascent chains from stalled ribosomes and their subsequent degradation. Probably generates substrates for RQC. This is Endonuclease MutS2 from Bacillus mycoides (strain KBAB4) (Bacillus weihenstephanensis).